Reading from the N-terminus, the 1807-residue chain is Nucleoporin nup189 (1807 aa).

The interval 1–118 (MFGQNNSSGF…SGGGLFGSNT (118 aa)) is disordered. GLFG repeat units follow at residues 26–29 (GLFG) and 66–69 (GLFG). Over residues 29–61 (GSNSNTPGNTLFGSQNTSTTGFGQNTTQPLFGS) the composition is skewed to polar residues. A compositionally biased stretch (low complexity) spans 62–77 (NTNGGLFGNRNNTTTT). Residues 78–90 (GGTGFGMSSGTGM) are compositionally biased toward gly residues. The segment covering 93–108 (QSNTPAFGGTNNATNP) has biased composition (polar residues). GLFG repeat units lie at residues 112–115 (GLFG), 152–155 (GLFG), 177–180 (GLFG), 308–311 (GLFG), 335–338 (GLFG), 350–353 (GLFG), 381–384 (GLFG), 399–402 (GLFG), 435–438 (GLFG), and 521–524 (GLFG). The span at 565–584 (PGTGLFGSTQTNNATSNTGT) shows a compositional bias: polar residues. The disordered stretch occupies residues 565 to 685 (PGTGLFGSTQ…SSTTSQVAPT (121 aa)). GLFG repeat units lie at residues 585–588 (GLFG), 611–614 (GLFG), 627–630 (GLFG), and 646–649 (GLFG). Positions 588–600 (GSNNANTTNTGGS) are enriched in low complexity. A compositionally biased stretch (polar residues) spans 603–644 (NKPSTTTGGLFGNTTAQQPSTTTSGLFGASNTNNQAQTSNFG). Residues 653–663 (AGQQQQPLQAS) are compositionally biased toward low complexity. Over residues 664–685 (IDQNPYGNNPLFSSTTSQVAPT) the composition is skewed to polar residues. At Ser-724 the chain carries Phosphoserine. The disordered stretch occupies residues 785–814 (QNGVKNGNDAKSDSKVQEKAPQNEADGSLK). Residues 792–802 (NDAKSDSKVQE) show a composition bias toward basic and acidic residues. One can recognise a Peptidase S59 domain in the interval 822–963 (SDDYWMKPSI…GKWIFKVQHF (142 aa)). Positions 974–1020 (EENDMSSTSNEAGNLKKYDQPNLKVSGKNDSFVTHHTPGAFPNDSKN) are disordered. Ser-1051 carries the phosphoserine modification. Residues 1082–1104 (KENNVPLSEDDLSNSSESSNESV) are disordered. Residues 1094-1104 (SNSSESSNESV) show a composition bias toward low complexity.

It belongs to the nucleoporin GLFG family. In terms of assembly, interacts (via G-L-F-G repeats) with rpn15/dss1. Interacts with raf1. Interacts with ned1. Post-translationally, nup189 is autocatalytically cleaved in nup98 and nup96.

The protein localises to the nucleus. It localises to the nuclear pore complex. In terms of biological role, functions as a component of the nuclear pore complex (NPC). NPC components, collectively referred to as nucleoporins (NUPs), can play the role of both NPC structural components and of docking or interaction partners for transiently associated nuclear transport factors. Active directional transport is assured by both, a Phe-Gly (FG) repeat affinity gradient for these transport factors across the NPC and a transport cofactor concentration gradient across the nuclear envelope. Nup189 is autocatalytically cleaved in vivo in 2 polypeptides which assume different functions in the NPC. Nup98 as one of the FG repeat nucleoporins participates in karyopherin interactions and contains part of the autocatalytic cleavage activity. Nup96 as part of the NUP84 complex is involved in nuclear poly(A)+ RNA and tRNA export. In Schizosaccharomyces pombe (strain 972 / ATCC 24843) (Fission yeast), this protein is Nucleoporin nup189 (nup189).